A 438-amino-acid polypeptide reads, in one-letter code: 2-(3-amino-3-carboxypropyl)histidine synthase subunit 1 (438 aa).

The tract at residues 1–24 (MAALVVSETAEPGSRVGPGRGRIS) is disordered. 3 residues coordinate [4Fe-4S] cluster: Cys-110, Cys-214, and Cys-342. A disordered region spans residues 402–438 (LCQPASDKVQQGSRGGSPAPACESCNCADQKATSPAP). The residue at position 418 (Ser-418) is a Phosphoserine.

Belongs to the DPH1/DPH2 family. DPH1 subfamily. As to quaternary structure, component of the 2-(3-amino-3-carboxypropyl)histidine synthase complex composed of DPH1, DPH2, DPH3 and a NADH-dependent reductase. Interacts with DPH2. Interacts with RBM8A. Requires [4Fe-4S] cluster as cofactor. Strongly expressed in kidney and liver. Moderately expressed in brain, skin and testis. Weakly expressed in heart, lung, small intestine, spleen, stomach and thymus.

It localises to the nucleus. Its subcellular location is the cytoplasm. It carries out the reaction L-histidyl-[translation elongation factor 2] + S-adenosyl-L-methionine = 2-[(3S)-amino-3-carboxypropyl]-L-histidyl-[translation elongation factor 2] + S-methyl-5'-thioadenosine + H(+). Its pathway is protein modification; peptidyl-diphthamide biosynthesis. Functionally, catalyzes the first step of diphthamide biosynthesis, a post-translational modification of histidine which occurs in elongation factor 2. DPH1 and DPH2 transfer a 3-amino-3-carboxypropyl (ACP) group from S-adenosyl-L-methionine (SAM) to a histidine residue, the reaction is assisted by a reduction system comprising DPH3 and a NADH-dependent reductase. Acts as a tumor suppressor. This is 2-(3-amino-3-carboxypropyl)histidine synthase subunit 1 from Mus musculus (Mouse).